The following is a 110-amino-acid chain: Acylphosphatase (110 aa).

The Acylphosphatase-like domain occupies 20–108 (RAHIFVRGKV…GEFNDFSILP (89 aa)). Active-site residues include arginine 35 and asparagine 53.

The protein belongs to the acylphosphatase family.

The enzyme catalyses an acyl phosphate + H2O = a carboxylate + phosphate + H(+). This is Acylphosphatase (acyP) from Pyrobaculum calidifontis (strain DSM 21063 / JCM 11548 / VA1).